The primary structure comprises 497 residues: Probable cytosol aminopeptidase (497 aa).

2 residues coordinate Mn(2+): lysine 265 and aspartate 270. Lysine 277 is a catalytic residue. 3 residues coordinate Mn(2+): aspartate 288, aspartate 347, and glutamate 349. Arginine 351 is an active-site residue.

It belongs to the peptidase M17 family. It depends on Mn(2+) as a cofactor.

It localises to the cytoplasm. The enzyme catalyses Release of an N-terminal amino acid, Xaa-|-Yaa-, in which Xaa is preferably Leu, but may be other amino acids including Pro although not Arg or Lys, and Yaa may be Pro. Amino acid amides and methyl esters are also readily hydrolyzed, but rates on arylamides are exceedingly low.. It carries out the reaction Release of an N-terminal amino acid, preferentially leucine, but not glutamic or aspartic acids.. Its function is as follows. Presumably involved in the processing and regular turnover of intracellular proteins. Catalyzes the removal of unsubstituted N-terminal amino acids from various peptides. In Geobacillus sp. (strain WCH70), this protein is Probable cytosol aminopeptidase.